A 380-amino-acid polypeptide reads, in one-letter code: Cytochrome b (380 aa).

The next 4 helical transmembrane spans lie at 34–54 (FGSL…LLAM), 78–99 (WLIR…YLHI), 114–134 (WNTG…GYVL), and 179–199 (FFAL…VHLT). Residues H84 and H98 each contribute to the heme b site. Heme b is bound by residues H183 and H197. H202 serves as a coordination point for a ubiquinone. A run of 4 helical transmembrane segments spans residues 227–247 (LKDI…ALFS), 289–309 (LGGV…PFLH), 321–341 (LSQL…WVGS), and 348–368 (FIII…ILFP).

This sequence belongs to the cytochrome b family. The cytochrome bc1 complex contains 11 subunits: 3 respiratory subunits (MT-CYB, CYC1 and UQCRFS1), 2 core proteins (UQCRC1 and UQCRC2) and 6 low-molecular weight proteins (UQCRH/QCR6, UQCRB/QCR7, UQCRQ/QCR8, UQCR10/QCR9, UQCR11/QCR10 and a cleavage product of UQCRFS1). This cytochrome bc1 complex then forms a dimer. The cofactor is heme b.

It localises to the mitochondrion inner membrane. In terms of biological role, component of the ubiquinol-cytochrome c reductase complex (complex III or cytochrome b-c1 complex) that is part of the mitochondrial respiratory chain. The b-c1 complex mediates electron transfer from ubiquinol to cytochrome c. Contributes to the generation of a proton gradient across the mitochondrial membrane that is then used for ATP synthesis. The chain is Cytochrome b (MT-CYB) from Procellaria parkinsoni (Black petrel).